Consider the following 419-residue polypeptide: Ribosomal RNA large subunit methyltransferase G (419 aa).

Basic and acidic residues predominate over residues 386-408 (KAEPFETHPTEAEAKVEVTESKP). The interval 386-419 (KAEPFETHPTEAEAKVEVTESKPHPQSSLYGTKK) is disordered. Over residues 409-419 (HPQSSLYGTKK) the composition is skewed to polar residues.

Belongs to the methyltransferase superfamily. RlmG family.

The protein localises to the cytoplasm. The catalysed reaction is guanosine(1835) in 23S rRNA + S-adenosyl-L-methionine = N(2)-methylguanosine(1835) in 23S rRNA + S-adenosyl-L-homocysteine + H(+). Its function is as follows. Specifically methylates the guanine in position 1835 (m2G1835) of 23S rRNA. This chain is Ribosomal RNA large subunit methyltransferase G, found in Shewanella woodyi (strain ATCC 51908 / MS32).